We begin with the raw amino-acid sequence, 132 residues long: ATP synthase epsilon chain 1 (132 aa).

This sequence belongs to the ATPase epsilon chain family. In terms of assembly, F-type ATPases have 2 components, CF(1) - the catalytic core - and CF(0) - the membrane proton channel. CF(1) has five subunits: alpha(3), beta(3), gamma(1), delta(1), epsilon(1). CF(0) has three main subunits: a, b and c.

Its subcellular location is the cell inner membrane. Functionally, produces ATP from ADP in the presence of a proton gradient across the membrane. This is ATP synthase epsilon chain 1 from Cereibacter sphaeroides (strain ATCC 17023 / DSM 158 / JCM 6121 / CCUG 31486 / LMG 2827 / NBRC 12203 / NCIMB 8253 / ATH 2.4.1.) (Rhodobacter sphaeroides).